We begin with the raw amino-acid sequence, 381 residues long: DNA primase DnaG (381 aa).

In terms of domain architecture, Toprim spans 173–259; sequence DAILVVEGRS…EVEDLEKDEI (87 aa). The Mg(2+) site is built by Glu-179, Asp-221, and Asp-223.

Belongs to the archaeal DnaG primase family. As to quaternary structure, forms a ternary complex with MCM helicase and DNA. Component of the archaeal exosome complex. Requires Mg(2+) as cofactor.

It catalyses the reaction ssDNA + n NTP = ssDNA/pppN(pN)n-1 hybrid + (n-1) diphosphate.. RNA polymerase that catalyzes the synthesis of short RNA molecules used as primers for DNA polymerase during DNA replication. Also part of the exosome, which is a complex involved in RNA degradation. Acts as a poly(A)-binding protein that enhances the interaction between heteromeric, adenine-rich transcripts and the exosome. In Methanothermobacter thermautotrophicus (strain ATCC 29096 / DSM 1053 / JCM 10044 / NBRC 100330 / Delta H) (Methanobacterium thermoautotrophicum), this protein is DNA primase DnaG.